The sequence spans 84 residues: MSKGHSLQDPYLNTLRKERVPVSIYLVNGIKLQGQIESFDQFVILLKNTVSQMVYKHAISTVVPSRPVRLPTASEGEQPEPGNA.

The Sm domain occupies 9-68 (DPYLNTLRKERVPVSIYLVNGIKLQGQIESFDQFVILLKNTVSQMVYKHAISTVVPSRPV).

The protein belongs to the Hfq family. Homohexamer.

Its function is as follows. RNA chaperone that binds small regulatory RNA (sRNAs) and mRNAs to facilitate mRNA translational regulation in response to envelope stress, environmental stress and changes in metabolite concentrations. Also binds with high specificity to tRNAs. The polypeptide is RNA-binding protein Hfq (Azotobacter vinelandii (strain DJ / ATCC BAA-1303)).